Reading from the N-terminus, the 290-residue chain is Porphobilinogen deaminase (290 aa).

The residue at position 237 (Cys-237) is an S-(dipyrrolylmethanemethyl)cysteine.

It belongs to the HMBS family. Monomer. Requires dipyrromethane as cofactor.

It catalyses the reaction 4 porphobilinogen + H2O = hydroxymethylbilane + 4 NH4(+). It functions in the pathway porphyrin-containing compound metabolism; protoporphyrin-IX biosynthesis; coproporphyrinogen-III from 5-aminolevulinate: step 2/4. Its function is as follows. Tetrapolymerization of the monopyrrole PBG into the hydroxymethylbilane pre-uroporphyrinogen in several discrete steps. The sequence is that of Porphobilinogen deaminase from Clostridium botulinum (strain ATCC 19397 / Type A).